The primary structure comprises 415 residues: MEQIPFVSSAPNTLGIELELQLINPRSFDLAAAADELLAQMANHPIADRVKPEITRSMIELNSSVHEHPMGLLAEMREMRDALCDAADAVGVSVAGGGAHPFMRWQERAISDSPRFQYLAEMYGYLARQFTVFGQHIHLGVPSGDAAVRMVRGLSPYVPHFIALSASSPYYEGVDTLFSCCRLNAVSSFPLAGHLPADVTDWYRFEAHIAQLRACGLAESIKDLYWDIRPKPEFGTVEIRVCDTPLTVERACQLAAFAQALAVLVTREPEPAPAAWLAYRSNHFQACRFGLQGSYVTPDGQRLRLIDHLRALFQRLMPIADELGTGDMLVALRDESIRNGNDARWLRSQFHRLRDLPLVVESMTHAWRGERETAGAAAEVPRRRIRATSEPVHGVQALATPEAGVTPGWRPDRLH.

This sequence belongs to the glutamate--cysteine ligase type 2 family. YbdK subfamily.

It catalyses the reaction L-cysteine + L-glutamate + ATP = gamma-L-glutamyl-L-cysteine + ADP + phosphate + H(+). In terms of biological role, ATP-dependent carboxylate-amine ligase which exhibits weak glutamate--cysteine ligase activity. This is Putative glutamate--cysteine ligase 2 from Bordetella petrii (strain ATCC BAA-461 / DSM 12804 / CCUG 43448).